We begin with the raw amino-acid sequence, 346 residues long: Transcription factor 19 (346 aa).

The region spanning 31-88 is the FHA domain; it reads YRLGCRADLCDVALRPQQEPGFISEVHAELHAERRGDDWRVSLEDHSSQGTLVNNVRL. Ser-78 is modified (phosphoserine). 2 disordered regions span residues 136–168 and 190–289; these read PRSRGEEGETRAGFRPMLPSQGAPQRPLSTLSP and LTFS…AAGG. Basic and acidic residues predominate over residues 138-147; it reads SRGEEGETRA. Polar residues predominate over residues 190–208; it reads LTFSRSGSGPQNPPVSTTP. The span at 250–260 shows a compositional bias: basic and acidic residues; it reads EPRKKLLRVEK. Residues 294 to 343 form a PHD-type zinc finger; the sequence is AAPCCCLPQEETVAWVQCDGCDTWFHVACVGCSIQAAKEADFRCPGCRVG. Zn(2+) is bound by residues Cys-297, Cys-299, Cys-311, Cys-314, His-319, Cys-322, Cys-337, and Cys-340.

It is found in the nucleus. Its function is as follows. Potential transcription factor that may play a role in the regulation of genes involved in cell cycle G1/S transition. May bind to regulatory elements of genes, including the promoter of the transcription factor FOXO1. This Sus scrofa (Pig) protein is Transcription factor 19 (TCF19).